The primary structure comprises 171 residues: Translationally-controlled tumor protein homolog (171 aa).

Residues 1–171 (MKIWKDVFTG…FKHGLEEEKF (171 aa)) form the TCTP domain.

It belongs to the TCTP family.

Its subcellular location is the cytoplasm. Functionally, involved in calcium binding and microtubule stabilization. The chain is Translationally-controlled tumor protein homolog from Anopheles gambiae (African malaria mosquito).